A 141-amino-acid chain; its full sequence is Hemoglobin subunit alpha (141 aa).

A Globin domain is found at 1-141 (VLSPTDKTNV…VSTVLTSKYR (141 aa)). Phosphoserine is present on Ser3. Lys7 carries the post-translational modification N6-succinyllysine. Residue Thr8 is modified to Phosphothreonine. An N6-succinyllysine modification is found at Lys11. Position 24 is a phosphotyrosine (Tyr24). Position 35 is a phosphoserine (Ser35). Lys40 is modified (N6-succinyllysine). The residue at position 49 (Ser49) is a Phosphoserine. His58 contacts O2. His87 contributes to the heme b binding site. Phosphoserine is present on Ser102. Thr108 bears the Phosphothreonine mark. At Ser124 the chain carries Phosphoserine. Phosphothreonine is present on residues Thr134 and Thr137. Ser138 carries the post-translational modification Phosphoserine.

It belongs to the globin family. As to quaternary structure, heterotetramer of two alpha chains and two beta chains. Red blood cells.

In terms of biological role, involved in oxygen transport from the lung to the various peripheral tissues. Hemopressin acts as an antagonist peptide of the cannabinoid receptor CNR1. Hemopressin-binding efficiently blocks cannabinoid receptor CNR1 and subsequent signaling. This is Hemoglobin subunit alpha (HBA) from Rhinoceros unicornis (Greater Indian rhinoceros).